The chain runs to 969 residues: Exoribonuclease II, mitochondrial (969 aa).

A mitochondrion-targeting transit peptide spans 1–41; it reads MVVRRKVHVLLIARSFHSYTPCFRVTTRGKRQRSKSKQQAK. The segment covering 28–38 has biased composition (basic residues); sequence RGKRQRSKSKQ. The interval 28 to 54 is disordered; sequence RGKRQRSKSKQQAKVELDHTRELDNDQ. The span at 40–51 shows a compositional bias: basic and acidic residues; the sequence is AKVELDHTRELD. The region spanning 522–853 is the RNB domain; sequence RYDFGDLRVF…NHLQIHRHLQ (332 aa).

This sequence belongs to the RNR ribonuclease family. MSU1 and SUV3 are the two components of the mitochondrial degradosome (mtEXO).

The protein resides in the mitochondrion matrix. It carries out the reaction Exonucleolytic cleavage in the 3'- to 5'-direction to yield nucleoside 5'-phosphates.. Functionally, essential for mitochondrial biogenesis. Required for intron-independent turnover and processing of mitochondrial RNA. Participates in 3' mtRNA processing where it hydrolyzes single-stranded RNA or partially double-stranded RNA with 3' single-stranded tails. This Saccharomyces cerevisiae (strain ATCC 204508 / S288c) (Baker's yeast) protein is Exoribonuclease II, mitochondrial (DSS1).